A 241-amino-acid polypeptide reads, in one-letter code: Large ribosomal subunit protein uL3 (241 aa).

Disordered regions lie at residues 139 to 166 (VSHR…PGHM) and 209 to 241 (KKPL…KEGA). The residue at position 151 (Gln-151) is an N5-methylglutamine.

It belongs to the universal ribosomal protein uL3 family. As to quaternary structure, part of the 50S ribosomal subunit. Forms a cluster with proteins L14 and L19. Methylated by PrmB.

Functionally, one of the primary rRNA binding proteins, it binds directly near the 3'-end of the 23S rRNA, where it nucleates assembly of the 50S subunit. The chain is Large ribosomal subunit protein uL3 from Nitrobacter hamburgensis (strain DSM 10229 / NCIMB 13809 / X14).